The chain runs to 695 residues: Probable pre-mRNA-splicing factor ATP-dependent RNA helicase DEAH9 (695 aa).

One can recognise a Helicase ATP-binding domain in the interval 58–223 (LYLVENHATT…FNSSKKRHAP (166 aa)). 71 to 78 (GETGSGKT) contributes to the ATP binding site. The DEAH box signature appears at 170–173 (DEAH). The region spanning 261-438 (SVVSTILLIN…STVIQLKALG (178 aa)) is the Helicase C-terminal domain.

Belongs to the DEAD box helicase family. DEAH subfamily. DDX35 sub-subfamily.

It catalyses the reaction ATP + H2O = ADP + phosphate + H(+). Its function is as follows. May be involved in pre-mRNA splicing. The chain is Probable pre-mRNA-splicing factor ATP-dependent RNA helicase DEAH9 from Arabidopsis thaliana (Mouse-ear cress).